We begin with the raw amino-acid sequence, 225 residues long: Uridylate kinase (225 aa).

An ATP-binding site is contributed by 9–10 (GS). G44 lines the UMP pocket. ATP-binding residues include G45 and R49. UMP contacts are provided by residues D66 and 114–120 (THPGHTT). 4 residues coordinate ATP: T140, N141, Y146, and D149.

The protein belongs to the UMP kinase family. Homohexamer.

It localises to the cytoplasm. It carries out the reaction UMP + ATP = UDP + ADP. The protein operates within pyrimidine metabolism; CTP biosynthesis via de novo pathway; UDP from UMP (UMPK route): step 1/1. Inhibited by UTP. In terms of biological role, catalyzes the reversible phosphorylation of UMP to UDP. This is Uridylate kinase from Thermococcus sibiricus (strain DSM 12597 / MM 739).